A 506-amino-acid polypeptide reads, in one-letter code: Maturase K (506 aa).

This sequence belongs to the intron maturase 2 family. MatK subfamily.

It is found in the plastid. The protein localises to the chloroplast. Its function is as follows. Usually encoded in the trnK tRNA gene intron. Probably assists in splicing its own and other chloroplast group II introns. This Trifolium resupinatum (Persian clover) protein is Maturase K.